Reading from the N-terminus, the 365-residue chain is Class I histocompatibility antigen, Gogo-A*0401 alpha chain (365 aa).

Residues 1 to 24 (MAVMAPRTLVLLLSGALALTQTWA) form the signal peptide. The segment at 25–114 (GSHSMRYFYT…LRGYYNQSED (90 aa)) is alpha-1. Residues 25-308 (GSHSMRYFYT…EPSSQPTIPI (284 aa)) lie on the Extracellular side of the membrane. N-linked (GlcNAc...) asparagine glycosylation occurs at N110. The tract at residues 115-206 (GSHTIQRMYG…ENGKETLQLT (92 aa)) is alpha-2. 2 disulfides stabilise this stretch: C125/C188 and C227/C283. Residues 207-298 (DAPKTHMTHH…GLPKPLTLRW (92 aa)) are alpha-3. In terms of domain architecture, Ig-like C1-type spans 209–295 (PKTHMTHHPV…QHEGLPKPLT (87 aa)). Residues 299–308 (EPSSQPTIPI) are connecting peptide. A helical membrane pass occupies residues 309 to 332 (VGIIAGLVLFGAVIAGAVVAAVRW). Topologically, residues 333–365 (RRKSSDRKGGSYSQAASSDSAQGSDVSLTACKV) are cytoplasmic. The tract at residues 338 to 365 (DRKGGSYSQAASSDSAQGSDVSLTACKV) is disordered. A compositionally biased stretch (low complexity) spans 342-359 (GSYSQAASSDSAQGSDVS). Position 343 is a phosphoserine (S343). Phosphotyrosine is present on Y344. Phosphoserine is present on residues S345, S349, S350, S352, S356, and S359.

This sequence belongs to the MHC class I family. As to quaternary structure, heterodimer of an alpha chain and a beta chain (beta-2-microglobulin).

The protein localises to the membrane. In terms of biological role, involved in the presentation of foreign antigens to the immune system. In Gorilla gorilla gorilla (Western lowland gorilla), this protein is Class I histocompatibility antigen, Gogo-A*0401 alpha chain.